A 314-amino-acid chain; its full sequence is NF-kappa-B inhibitor alpha (314 aa).

The interval M1–D39 is disordered. The segment covering G15–D39 has biased composition (basic and acidic residues). K21 is covalently cross-linked (Glycyl lysine isopeptide (Lys-Gly) (interchain with G-Cter in SUMO); alternate). K21 participates in a covalent cross-link: Glycyl lysine isopeptide (Lys-Gly) (interchain with G-Cter in ubiquitin); alternate. K22 is covalently cross-linked (Glycyl lysine isopeptide (Lys-Gly) (interchain with G-Cter in ubiquitin)). Positions H30–S36 match the Destruction motif motif. S32 carries the post-translational modification Phosphoserine; by IKKA and IKKB. S36 carries the phosphoserine; by IKKA, IKKB, IKKE and TBK1 modification. The residue at position 42 (Y42) is a Phosphotyrosine; by Tyr-kinases. Positions M45–L54 match the Nuclear export signal motif. A Nuclear import signal motif is present at residues L110–I120. ANK repeat units follow at residues L110–L139, R143–L172, N182–A211, and N216–R245. (3S)-3-hydroxyasparagine; by HIF1AN occurs at positions 210 and 244. S283 and S288 each carry phosphoserine; by CK2. Position 291 is a phosphothreonine; by CK2 (T291). The residue at position 293 (S293) is a Phosphoserine; by CK2. The residue at position 296 (T296) is a Phosphothreonine.

Belongs to the NF-kappa-B inhibitor family. Interacts with RELA; the interaction requires the nuclear import signal. Part of a 70-90 kDa complex at least consisting of CHUK, IKBKB, NFKBIA, RELA, ELP1 and MAP3K14. Interacts with NKIRAS1 and NKIRAS2. Interacts with RWDD3; the interaction enhances sumoylation. Interacts with PRMT2. Interacts with PRKACA in platelets; this interaction is disrupted by thrombin and collagen. Interacts with MEFV. Interacts with DDRGK1; positively regulates NFKBIA phosphorylation and degradation. Interacts with HNRNPA2B1; the interaction may be mediated by the RRM2 domain of HNRNPA2B1, and HNRNPA2B1 may interact simultaneously with FAM76B and either NFKBIA or NFKBIE to form a complex. Phosphorylated at Ser-32 and Ser-36 by IKKA/CHUK and IKKB/IKBKB; disables inhibition of NF-kappa-B DNA-binding activity. Phosphorylation at positions 32 and 36 is prerequisite to recognition by the SCF(FBXW11) and SCF(BTRC) complexes, leading to polyubiquitination and subsequent degradation. Post-translationally, polyubiquitinated at Lys-21 and/or Lys-22 following phosphorylation at Ser-32 and Ser-36. Monoubiquitinated at Lys-21 and/or Lys-22 by UBE2D3. Ubiquitin chain elongation is then performed by CDC34 in cooperation with the SCF(FBXW11) E3 ligase complex, building ubiquitin chains from the UBE2D3-primed NFKBIA-linked ubiquitin. The resulting polyubiquitination leads to protein degradation. Also ubiquitinated by the SCF(BTRC) complex following stimulus-dependent phosphorylation at Ser-32 and Ser-36. Deubiquitinated by USP38, leading to NF-kappa-B inhibition. In terms of processing, sumoylated; sumoylation requires the presence of the nuclear import signal. Sumoylation blocks ubiquitination and proteasome-mediated degradation of the protein thereby increasing the protein stability. Hydroxylated by HIF1AN.

It is found in the cytoplasm. Its subcellular location is the nucleus. Its function is as follows. Inhibits the activity of dimeric NF-kappa-B/REL complexes by trapping REL (RELA/p65 and NFKB1/p50) dimers in the cytoplasm by masking their nuclear localization signals. On cellular stimulation by immune and pro-inflammatory responses, becomes phosphorylated promoting ubiquitination and degradation, enabling the dimeric RELA to translocate to the nucleus and activate transcription. This Rattus norvegicus (Rat) protein is NF-kappa-B inhibitor alpha (Nfkbia).